The chain runs to 1044 residues: Eukaryotic translation initiation factor 3 subunit A (1044 aa).

Residues 92-121 adopt a coiled-coil conformation; sequence LKKFIELAEKKVTEAQAKADEIQSSLESAA. One can recognise a PCI domain in the interval 339-523; it reads MTKAASFVLL…GVLTFDTDIF (185 aa). Residues 611–907 adopt a coiled-coil conformation; sequence IDKKKEAATD…EARRAARKAG (297 aa). Over residues 797 to 901 the composition is skewed to basic and acidic residues; the sequence is SEKRHEEFEK…QREEEAEARR (105 aa). Residues 797–1044 form a disordered region; the sequence is SEKRHEEFEK…WVPRWKQQQS (248 aa). 2 stretches are compositionally biased toward low complexity: residues 943–956 and 1006–1017; these read KEAA…AAPA and SSSSQPPSRTQT.

The protein belongs to the eIF-3 subunit A family. As to quaternary structure, component of the eukaryotic translation initiation factor 3 (eIF-3) complex.

The protein resides in the cytoplasm. Functionally, RNA-binding component of the eukaryotic translation initiation factor 3 (eIF-3) complex, which is involved in protein synthesis of a specialized repertoire of mRNAs and, together with other initiation factors, stimulates binding of mRNA and methionyl-tRNAi to the 40S ribosome. The eIF-3 complex specifically targets and initiates translation of a subset of mRNAs involved in cell proliferation. This Aspergillus clavatus (strain ATCC 1007 / CBS 513.65 / DSM 816 / NCTC 3887 / NRRL 1 / QM 1276 / 107) protein is Eukaryotic translation initiation factor 3 subunit A (tif32).